The sequence spans 496 residues: Probable serine/threonine-protein kinase DDB_G0284251 (496 aa).

The segment covering 1 to 13 (MIEINNNHNNGNG) has biased composition (low complexity). Residues 1–25 (MIEINNNHNNGNGKQFPSSQIMPDS) form a disordered region. Residues 36–288 (YTLGEKIGRG…AQELLQHPIF (253 aa)) form the Protein kinase domain. ATP contacts are provided by residues 42-50 (IGRGAFGQV) and Lys-65. Catalysis depends on Asp-158, which acts as the Proton acceptor. Residues 323–345 (DWGSSSSTSGSSTPLSSSSSSSN) are disordered. Positions 353 to 386 (EDFNKLQTTIKQQAQTISNLSEEILILKKELKEK) form a coiled coil. The disordered stretch occupies residues 454-496 (PQLTPSSSRENISLSNSSSSIPNPNQNQNQNNKSKSKKFGFFS). Low complexity predominate over residues 458-486 (PSSSRENISLSNSSSSIPNPNQNQNQNNK). Residues 487-496 (SKSKKFGFFS) show a composition bias toward basic residues.

It belongs to the protein kinase superfamily. STE Ser/Thr protein kinase family. It depends on Mg(2+) as a cofactor.

The catalysed reaction is L-seryl-[protein] + ATP = O-phospho-L-seryl-[protein] + ADP + H(+). It carries out the reaction L-threonyl-[protein] + ATP = O-phospho-L-threonyl-[protein] + ADP + H(+). This Dictyostelium discoideum (Social amoeba) protein is Probable serine/threonine-protein kinase DDB_G0284251.